The sequence spans 90 residues: Acylphosphatase (90 aa).

The Acylphosphatase-like domain occupies Cys4–Tyr90. Catalysis depends on residues Arg19 and Asn37.

It belongs to the acylphosphatase family.

It catalyses the reaction an acyl phosphate + H2O = a carboxylate + phosphate + H(+). The chain is Acylphosphatase (acyP) from Methanothrix thermoacetophila (strain DSM 6194 / JCM 14653 / NBRC 101360 / PT) (Methanosaeta thermophila).